The sequence spans 72 residues: Candidate secreted effector protein MPL124499 (72 aa).

Residues M1–G21 form the signal peptide.

It belongs to the CPGH1 family.

It localises to the secreted. It is found in the host cell. Its subcellular location is the host cytoplasm. The protein localises to the host nucleus. Rust effector delivered into infected tissues to modulate host functions and contribute to pathogen virulence. Enhances leaf colonization by the bacteria Pseudomonas syringae and the oomycete Hyaloperonospora arabidopsidis pathogens in an Arabidopsis thaliana infection model. This is Candidate secreted effector protein MPL124499 from Melampsora larici-populina (strain 98AG31 / pathotype 3-4-7) (Poplar leaf rust fungus).